A 149-amino-acid polypeptide reads, in one-letter code: Large ribosomal subunit protein bL9 (149 aa).

The protein belongs to the bacterial ribosomal protein bL9 family.

Its function is as follows. Binds to the 23S rRNA. In Aliivibrio fischeri (strain ATCC 700601 / ES114) (Vibrio fischeri), this protein is Large ribosomal subunit protein bL9.